Consider the following 385-residue polypeptide: Initiation-specific alpha-1,6-mannosyltransferase (385 aa).

At 1–15 (MLQLREPQMVHKHLK) the chain is on the cytoplasmic side. A helical; Signal-anchor for type II membrane protein transmembrane segment spans residues 16–36 (LAVLGIVVIFTTYFIISSLSS). Topologically, residues 37 to 385 (PTSTHKTEYN…KDDGMPEMEQ (349 aa)) are lumenal. The short motif at 189–191 (DID) is the DXD motif element.

The protein belongs to the glycosyltransferase 32 family. The cofactor is Mn(2+).

The protein localises to the endoplasmic reticulum membrane. It localises to the golgi apparatus membrane. The catalysed reaction is Transfers an alpha-D-mannosyl residue from GDP-mannose into lipid-linked oligosaccharide, forming an alpha-(1-&gt;6)-D-mannosyl-D-mannose linkage.. Mannosyltransferase involved in outer chain elongation of asparagine-linked oligosaccharides of the type Man(9)GlcNAc(2). Adds the first alpha-1,6-mannose to the Man(8)GlcNAc(2) and Man(9)GlcNAc(2), but not Man(5)GlcNAc(2), endoplasmic reticulum intermediates. Represents the first enzymatic event required for synthesis of outer chain mannose linkages on yeast secretory proteins. N-glycan outer chain epitopes play a crucial role in the host-fungal interaction, virulence, and host immune response such as interleukin synthesis or phagocytosis by neutrophils. This chain is Initiation-specific alpha-1,6-mannosyltransferase, found in Candida albicans (strain SC5314 / ATCC MYA-2876) (Yeast).